Here is a 62-residue protein sequence, read N- to C-terminus: Photosystem II reaction center protein Z (62 aa).

2 consecutive transmembrane segments (helical) span residues alanine 8–alanine 28 and phenylalanine 41–isoleucine 61.

The protein belongs to the PsbZ family. As to quaternary structure, PSII is composed of 1 copy each of membrane proteins PsbA, PsbB, PsbC, PsbD, PsbE, PsbF, PsbH, PsbI, PsbJ, PsbK, PsbL, PsbM, PsbT, PsbY, PsbZ, Psb30/Ycf12, at least 3 peripheral proteins of the oxygen-evolving complex and a large number of cofactors. It forms dimeric complexes.

Its subcellular location is the plastid. It localises to the chloroplast thylakoid membrane. In terms of biological role, may control the interaction of photosystem II (PSII) cores with the light-harvesting antenna, regulates electron flow through the 2 photosystem reaction centers. PSII is a light-driven water plastoquinone oxidoreductase, using light energy to abstract electrons from H(2)O, generating a proton gradient subsequently used for ATP formation. This is Photosystem II reaction center protein Z from Hordeum vulgare (Barley).